We begin with the raw amino-acid sequence, 346 residues long: UDP-3-O-acylglucosamine N-acyltransferase (346 aa).

The active-site Proton acceptor is the histidine 253.

The protein belongs to the transferase hexapeptide repeat family. LpxD subfamily. As to quaternary structure, homotrimer.

The enzyme catalyses a UDP-3-O-[(3R)-3-hydroxyacyl]-alpha-D-glucosamine + a (3R)-hydroxyacyl-[ACP] = a UDP-2-N,3-O-bis[(3R)-3-hydroxyacyl]-alpha-D-glucosamine + holo-[ACP] + H(+). It functions in the pathway bacterial outer membrane biogenesis; LPS lipid A biosynthesis. Its function is as follows. Catalyzes the N-acylation of UDP-3-O-acylglucosamine using 3-hydroxyacyl-ACP as the acyl donor. Is involved in the biosynthesis of lipid A, a phosphorylated glycolipid that anchors the lipopolysaccharide to the outer membrane of the cell. The sequence is that of UDP-3-O-acylglucosamine N-acyltransferase from Rickettsia akari (strain Hartford).